Reading from the N-terminus, the 454-residue chain is Probable ECA polymerase (454 aa).

11 consecutive transmembrane segments (helical) span residues 3–23 (LGQFGGLFCIYLIAVIFILTL), 39–59 (FSMLYLLTFYFGFPLTCMLVF), 61–81 (FGVAVVPVEYLLYAMLSATAF), 119–139 (LALVAVGTVGIFFMQNGFLLF), 154–174 (GVALKRFFYFFIPAMLVVYFL), 180–200 (AWFFFLASTVAFGILTYVIVG), 201–221 (GTRANIIIAFSLFLFIGIVRG), 222–242 (WITLWMLAAAGVFGIVGMFWL), 340–360 (LVVMGGVLFIPLGAIVVGLII), 377–397 (YKAAILQSFCFGAVFNIIVLA), and 409–429 (VFFCVIFGACLVLAKLLYWLF).

This sequence belongs to the WzyE family. In terms of assembly, probably part of a complex composed of WzxE, WzyE and WzzE.

It localises to the cell inner membrane. It functions in the pathway bacterial outer membrane biogenesis; enterobacterial common antigen biosynthesis. Functionally, probably involved in the polymerization of enterobacterial common antigen (ECA) trisaccharide repeat units. This is Probable ECA polymerase from Yersinia pseudotuberculosis serotype O:1b (strain IP 31758).